The chain runs to 360 residues: Peptide chain release factor 1 (360 aa).

At Gln-235 the chain carries N5-methylglutamine.

It belongs to the prokaryotic/mitochondrial release factor family. In terms of processing, methylated by PrmC. Methylation increases the termination efficiency of RF1.

It localises to the cytoplasm. In terms of biological role, peptide chain release factor 1 directs the termination of translation in response to the peptide chain termination codons UAG and UAA. This Burkholderia pseudomallei (strain 1106a) protein is Peptide chain release factor 1.